A 141-amino-acid polypeptide reads, in one-letter code: Galactose-6-phosphate isomerase subunit LacA (141 aa).

It belongs to the LacAB/RpiB family. In terms of assembly, heteromultimeric protein consisting of LacA and LacB.

It catalyses the reaction aldehydo-D-galactose 6-phosphate = keto-D-tagatose 6-phosphate. It functions in the pathway carbohydrate metabolism; D-galactose 6-phosphate degradation; D-tagatose 6-phosphate from D-galactose 6-phosphate: step 1/1. This chain is Galactose-6-phosphate isomerase subunit LacA, found in Streptococcus pneumoniae serotype 2 (strain D39 / NCTC 7466).